The chain runs to 443 residues: Aspartic protease PEP3 (443 aa).

The N-terminal stretch at 1–36 (MQNRPRVFDSAMNLSPNMHFLSLMPGLLLLSLQVHT) is a signal peptide. Positions 37-107 (SPTPLKKTIR…NTVSKAMQAN (71 aa)) are cleaved as a propeptide — activation peptide. The Peptidase A1 domain maps to 123–440 (YLSPVTIGGQ…DLRGPSLHVA (318 aa)). Asp139 is a catalytic residue. Asn180 and Asn293 each carry an N-linked (GlcNAc...) asparagine glycan. Asp327 is an active-site residue. Cys363 and Cys403 are oxidised to a cystine. Asn364 and Asn388 each carry an N-linked (GlcNAc...) asparagine glycan.

This sequence belongs to the peptidase A1 family. As to quaternary structure, monomer.

The protein resides in the secreted. Its function is as follows. Secreted aspartic endopeptidase that allows assimilation of proteinaceous substrates. The scissile peptide bond is attacked by a nucleophilic water molecule activated by two aspartic residues in the active site. Shows a broad primary substrate specificity. Favors hydrophobic residues at the P1 and P1' positions. The chain is Aspartic protease PEP3 from Coccidioides posadasii (strain C735) (Valley fever fungus).